The primary structure comprises 308 residues: MSWLEKILEKSNIVSSRKASIPEGVWTKCTSCEQVLYHAELERNLEVCPKCNHHMRMKARRRLETFLDEGNRVELGGELEPQDKLKFKDSKRYKERIAAAQKSSGEKDALVAMKGELLGMPIVACAFEFSFMGGSMGSVVGARFVRAVEAAMENNCALVCFSASGGARMQEALMSLMQMAKTSAALERLSAKGLPFISVMTDPTMGGVSASLAMLGDINIGEPKALIGFAGRRVIEQTVREDLPEGFQRSEFLLEHGAIDMIVDRREMRQRVGGLIAKLTNHKSPLVVSVNDSPNEAAYSVPEANEKG.

The region spanning 25-294 (VWTKCTSCEQ…PLVVSVNDSP (270 aa)) is the CoA carboxyltransferase N-terminal domain. Residues cysteine 29, cysteine 32, cysteine 48, and cysteine 51 each contribute to the Zn(2+) site. The segment at 29–51 (CTSCEQVLYHAELERNLEVCPKC) adopts a C4-type zinc-finger fold.

The protein belongs to the AccD/PCCB family. Acetyl-CoA carboxylase is a heterohexamer composed of biotin carboxyl carrier protein (AccB), biotin carboxylase (AccC) and two subunits each of ACCase subunit alpha (AccA) and ACCase subunit beta (AccD). Zn(2+) is required as a cofactor.

It is found in the cytoplasm. It carries out the reaction N(6)-carboxybiotinyl-L-lysyl-[protein] + acetyl-CoA = N(6)-biotinyl-L-lysyl-[protein] + malonyl-CoA. It functions in the pathway lipid metabolism; malonyl-CoA biosynthesis; malonyl-CoA from acetyl-CoA: step 1/1. Component of the acetyl coenzyme A carboxylase (ACC) complex. Biotin carboxylase (BC) catalyzes the carboxylation of biotin on its carrier protein (BCCP) and then the CO(2) group is transferred by the transcarboxylase to acetyl-CoA to form malonyl-CoA. This Vibrio vulnificus (strain CMCP6) protein is Acetyl-coenzyme A carboxylase carboxyl transferase subunit beta.